Consider the following 159-residue polypeptide: MNDRIYLTRDGYNRLKEELYVLVHQKRKEVLEKIAEARAHGDLSENAEYDAAREEQSLTEAHIADLENKLSTATILDPKQVKTDKVYILTSVKLRDLDKEGEIIEYTLVSSEEADTDLGKISVRSPVGRALIGKTVGEKVQIMVPKGELHYEILEIFVK.

A coiled-coil region spans residues 47–73 (AEYDAAREEQSLTEAHIADLENKLSTA).

It belongs to the GreA/GreB family.

Functionally, necessary for efficient RNA polymerase transcription elongation past template-encoded arresting sites. The arresting sites in DNA have the property of trapping a certain fraction of elongating RNA polymerases that pass through, resulting in locked ternary complexes. Cleavage of the nascent transcript by cleavage factors such as GreA or GreB allows the resumption of elongation from the new 3'terminus. GreA releases sequences of 2 to 3 nucleotides. This chain is Transcription elongation factor GreA, found in Chlorobium phaeobacteroides (strain DSM 266 / SMG 266 / 2430).